Consider the following 827-residue polypeptide: Periplasmic nitrate reductase (827 aa).

Residues 1 to 33 (MNLSRRDFMKANAAMAAATAAGLTIPVKNVVAA) constitute a signal peptide (tat-type signal). A 4Fe-4S Mo/W bis-MGD-type domain is found at 37 to 93 (IKWDKGVCRFCGTGCAVLVGTKDGRVVASQGDPDAEVNRGLNCIKGYFLPKIMYGKD). [4Fe-4S] cluster contacts are provided by Cys-44, Cys-47, Cys-51, and Cys-79. Residues Lys-81, Gln-148, Asn-173, Cys-177, 210–217 (WGSNMAEM), 241–245 (STYEH), 260–262 (QTD), Met-370, Gln-374, Asn-480, 506–507 (SD), Lys-529, Asp-556, and 716–725 (TGRVLEHWHT) contribute to the Mo-bis(molybdopterin guanine dinucleotide) site. Phe-792 provides a ligand contact to substrate. Mo-bis(molybdopterin guanine dinucleotide) contacts are provided by Asn-800 and Lys-817.

The protein belongs to the prokaryotic molybdopterin-containing oxidoreductase family. NasA/NapA/NarB subfamily. As to quaternary structure, component of the periplasmic nitrate reductase NapAB complex composed of NapA and NapB. It depends on [4Fe-4S] cluster as a cofactor. Mo-bis(molybdopterin guanine dinucleotide) serves as cofactor. Predicted to be exported by the Tat system. The position of the signal peptide cleavage has not been experimentally proven.

It localises to the periplasm. It carries out the reaction 2 Fe(II)-[cytochrome] + nitrate + 2 H(+) = 2 Fe(III)-[cytochrome] + nitrite + H2O. Its function is as follows. Catalytic subunit of the periplasmic nitrate reductase complex NapAB. Receives electrons from NapB and catalyzes the reduction of nitrate to nitrite. The chain is Periplasmic nitrate reductase from Haemophilus influenzae (strain PittEE).